A 482-amino-acid polypeptide reads, in one-letter code: 3-isopropylmalate dehydratase large subunit (482 aa).

The [4Fe-4S] cluster site is built by C353, C414, and C417.

This sequence belongs to the aconitase/IPM isomerase family. LeuC type 1 subfamily. In terms of assembly, heterodimer of LeuC and LeuD. Requires [4Fe-4S] cluster as cofactor.

It carries out the reaction (2R,3S)-3-isopropylmalate = (2S)-2-isopropylmalate. It participates in amino-acid biosynthesis; L-leucine biosynthesis; L-leucine from 3-methyl-2-oxobutanoate: step 2/4. In terms of biological role, catalyzes the isomerization between 2-isopropylmalate and 3-isopropylmalate, via the formation of 2-isopropylmaleate. The polypeptide is 3-isopropylmalate dehydratase large subunit (Xanthomonas oryzae pv. oryzae (strain MAFF 311018)).